The sequence spans 281 residues: 4-diphosphocytidyl-2-C-methyl-D-erythritol kinase (281 aa).

Lys-11 is an active-site residue. 92–102 (LVSAGLAGGSA) lines the ATP pocket. Residue Asp-132 is part of the active site.

Belongs to the GHMP kinase family. IspE subfamily.

It catalyses the reaction 4-CDP-2-C-methyl-D-erythritol + ATP = 4-CDP-2-C-methyl-D-erythritol 2-phosphate + ADP + H(+). It participates in isoprenoid biosynthesis; isopentenyl diphosphate biosynthesis via DXP pathway; isopentenyl diphosphate from 1-deoxy-D-xylulose 5-phosphate: step 3/6. Functionally, catalyzes the phosphorylation of the position 2 hydroxy group of 4-diphosphocytidyl-2C-methyl-D-erythritol. This chain is 4-diphosphocytidyl-2-C-methyl-D-erythritol kinase, found in Ehrlichia ruminantium (strain Welgevonden).